Reading from the N-terminus, the 494-residue chain is UDP-N-acetylmuramoyl-L-alanyl-D-glutamate--L-lysine ligase (494 aa).

Serine 30 is a UDP-N-acetyl-alpha-D-muramoyl-L-alanyl-D-glutamate binding site. 110-116 (GTNGKTS) is a binding site for ATP. Residues 152-153 (TT), serine 179, and arginine 187 each bind UDP-N-acetyl-alpha-D-muramoyl-L-alanyl-D-glutamate. Lysine 219 is subject to N6-carboxylysine. Residues 406–409 (DNPA) carry the L-lysine recognition motif motif.

The protein belongs to the MurCDEF family. MurE subfamily. Post-translationally, carboxylation is probably crucial for Mg(2+) binding and, consequently, for the gamma-phosphate positioning of ATP.

The protein resides in the cytoplasm. The enzyme catalyses UDP-N-acetyl-alpha-D-muramoyl-L-alanyl-D-glutamate + L-lysine + ATP = UDP-N-acetyl-alpha-D-muramoyl-L-alanyl-gamma-D-glutamyl-L-lysine + ADP + phosphate + H(+). The protein operates within cell wall biogenesis; peptidoglycan biosynthesis. Catalyzes the addition of L-lysine to the nucleotide precursor UDP-N-acetylmuramoyl-L-alanyl-D-glutamate (UMAG) in the biosynthesis of bacterial cell-wall peptidoglycan. This Staphylococcus epidermidis (strain ATCC 35984 / DSM 28319 / BCRC 17069 / CCUG 31568 / BM 3577 / RP62A) protein is UDP-N-acetylmuramoyl-L-alanyl-D-glutamate--L-lysine ligase.